An 892-amino-acid chain; its full sequence is Alanine--tRNA ligase (892 aa).

Zn(2+)-binding residues include histidine 574, histidine 578, cysteine 676, and histidine 680.

This sequence belongs to the class-II aminoacyl-tRNA synthetase family. It depends on Zn(2+) as a cofactor.

The protein resides in the cytoplasm. The catalysed reaction is tRNA(Ala) + L-alanine + ATP = L-alanyl-tRNA(Ala) + AMP + diphosphate. Its function is as follows. Catalyzes the attachment of alanine to tRNA(Ala) in a two-step reaction: alanine is first activated by ATP to form Ala-AMP and then transferred to the acceptor end of tRNA(Ala). Also edits incorrectly charged Ser-tRNA(Ala) and Gly-tRNA(Ala) via its editing domain. The protein is Alanine--tRNA ligase of Prochlorococcus marinus (strain SARG / CCMP1375 / SS120).